The primary structure comprises 395 residues: Xylose isomerase (395 aa).

Catalysis depends on residues H54 and D57. Residues E181, E217, H220, D245, D255, D257, and D293 each coordinate Mg(2+).

The protein belongs to the xylose isomerase family. As to quaternary structure, homotetramer. Mg(2+) is required as a cofactor.

Its subcellular location is the cytoplasm. It carries out the reaction alpha-D-xylose = alpha-D-xylulofuranose. In Pseudarthrobacter chlorophenolicus (strain ATCC 700700 / DSM 12829 / CIP 107037 / JCM 12360 / KCTC 9906 / NCIMB 13794 / A6) (Arthrobacter chlorophenolicus), this protein is Xylose isomerase.